The chain runs to 205 residues: Dephospho-CoA kinase (205 aa).

Residues 13–205 (RIGLTGGIAS…KWINTIREIL (193 aa)) enclose the DPCK domain. 21 to 26 (ASGKST) contributes to the ATP binding site.

This sequence belongs to the CoaE family.

It is found in the cytoplasm. The enzyme catalyses 3'-dephospho-CoA + ATP = ADP + CoA + H(+). Its pathway is cofactor biosynthesis; coenzyme A biosynthesis; CoA from (R)-pantothenate: step 5/5. In terms of biological role, catalyzes the phosphorylation of the 3'-hydroxyl group of dephosphocoenzyme A to form coenzyme A. The chain is Dephospho-CoA kinase from Prochlorococcus marinus (strain MIT 9312).